Consider the following 269-residue polypeptide: Tryptophan synthase alpha chain (269 aa).

Active-site proton acceptor residues include glutamate 49 and aspartate 60.

This sequence belongs to the TrpA family. In terms of assembly, tetramer of two alpha and two beta chains.

The enzyme catalyses (1S,2R)-1-C-(indol-3-yl)glycerol 3-phosphate + L-serine = D-glyceraldehyde 3-phosphate + L-tryptophan + H2O. It participates in amino-acid biosynthesis; L-tryptophan biosynthesis; L-tryptophan from chorismate: step 5/5. The alpha subunit is responsible for the aldol cleavage of indoleglycerol phosphate to indole and glyceraldehyde 3-phosphate. This chain is Tryptophan synthase alpha chain, found in Photobacterium profundum (strain SS9).